Consider the following 562-residue polypeptide: Formate--tetrahydrofolate ligase (562 aa).

An ATP-binding site is contributed by 71-78; the sequence is TPAGEGKS.

It belongs to the formate--tetrahydrofolate ligase family.

The enzyme catalyses (6S)-5,6,7,8-tetrahydrofolate + formate + ATP = (6R)-10-formyltetrahydrofolate + ADP + phosphate. Its pathway is one-carbon metabolism; tetrahydrofolate interconversion. This Bacillus cereus (strain ATCC 14579 / DSM 31 / CCUG 7414 / JCM 2152 / NBRC 15305 / NCIMB 9373 / NCTC 2599 / NRRL B-3711) protein is Formate--tetrahydrofolate ligase.